Reading from the N-terminus, the 426-residue chain is Tol-Pal system protein TolB (426 aa).

A signal peptide spans 1 to 24 (MKLKSRYTSLISVVSIFFSSMVMA).

Belongs to the TolB family. As to quaternary structure, the Tol-Pal system is composed of five core proteins: the inner membrane proteins TolA, TolQ and TolR, the periplasmic protein TolB and the outer membrane protein Pal. They form a network linking the inner and outer membranes and the peptidoglycan layer.

The protein localises to the periplasm. Its function is as follows. Part of the Tol-Pal system, which plays a role in outer membrane invagination during cell division and is important for maintaining outer membrane integrity. The protein is Tol-Pal system protein TolB of Haemophilus ducreyi (strain 35000HP / ATCC 700724).